The following is a 529-amino-acid chain: Peptide chain release factor 3 (529 aa).

Positions 11–280 (AKRRTFAIIS…GLVAWAPAPM (270 aa)) constitute a tr-type G domain. GTP-binding positions include 20–27 (SHPDAGKT), 88–92 (DTPGH), and 142–145 (NKLD).

The protein belongs to the TRAFAC class translation factor GTPase superfamily. Classic translation factor GTPase family. PrfC subfamily.

The protein localises to the cytoplasm. Functionally, increases the formation of ribosomal termination complexes and stimulates activities of RF-1 and RF-2. It binds guanine nucleotides and has strong preference for UGA stop codons. It may interact directly with the ribosome. The stimulation of RF-1 and RF-2 is significantly reduced by GTP and GDP, but not by GMP. The chain is Peptide chain release factor 3 from Salmonella gallinarum (strain 287/91 / NCTC 13346).